A 199-amino-acid polypeptide reads, in one-letter code: Ribosome maturation factor RimP (199 aa).

Positions 165–199 (AGNLPPQPEDDEDMLADFEIDESEDEEDPETGDVQ) are disordered. The span at 172–199 (PEDDEDMLADFEIDESEDEEDPETGDVQ) shows a compositional bias: acidic residues.

It belongs to the RimP family.

It localises to the cytoplasm. Functionally, required for maturation of 30S ribosomal subunits. The chain is Ribosome maturation factor RimP from Hyphomonas neptunium (strain ATCC 15444).